Consider the following 476-residue polypeptide: Aspartyl/glutamyl-tRNA(Asn/Gln) amidotransferase subunit B (476 aa).

It belongs to the GatB/GatE family. GatB subfamily. As to quaternary structure, heterotrimer of A, B and C subunits.

It catalyses the reaction L-glutamyl-tRNA(Gln) + L-glutamine + ATP + H2O = L-glutaminyl-tRNA(Gln) + L-glutamate + ADP + phosphate + H(+). The enzyme catalyses L-aspartyl-tRNA(Asn) + L-glutamine + ATP + H2O = L-asparaginyl-tRNA(Asn) + L-glutamate + ADP + phosphate + 2 H(+). Allows the formation of correctly charged Asn-tRNA(Asn) or Gln-tRNA(Gln) through the transamidation of misacylated Asp-tRNA(Asn) or Glu-tRNA(Gln) in organisms which lack either or both of asparaginyl-tRNA or glutaminyl-tRNA synthetases. The reaction takes place in the presence of glutamine and ATP through an activated phospho-Asp-tRNA(Asn) or phospho-Glu-tRNA(Gln). The chain is Aspartyl/glutamyl-tRNA(Asn/Gln) amidotransferase subunit B from Shouchella clausii (strain KSM-K16) (Alkalihalobacillus clausii).